The sequence spans 343 residues: Anthranilate phosphoribosyltransferase (343 aa).

Residues Gly-84, 87-88, Thr-92, 94-97, 112-120, and Ser-124 each bind 5-phospho-alpha-D-ribose 1-diphosphate; these read GD, NIST, and KHGNRGVSS. Gly-84 serves as a coordination point for anthranilate. Position 96 (Ser-96) interacts with Mg(2+). Asn-115 provides a ligand contact to anthranilate. Arg-170 is a binding site for anthranilate. 2 residues coordinate Mg(2+): Asp-229 and Glu-230.

Belongs to the anthranilate phosphoribosyltransferase family. Homodimer. The cofactor is Mg(2+).

The enzyme catalyses N-(5-phospho-beta-D-ribosyl)anthranilate + diphosphate = 5-phospho-alpha-D-ribose 1-diphosphate + anthranilate. It functions in the pathway amino-acid biosynthesis; L-tryptophan biosynthesis; L-tryptophan from chorismate: step 2/5. Its function is as follows. Catalyzes the transfer of the phosphoribosyl group of 5-phosphorylribose-1-pyrophosphate (PRPP) to anthranilate to yield N-(5'-phosphoribosyl)-anthranilate (PRA). The chain is Anthranilate phosphoribosyltransferase from Burkholderia thailandensis (strain ATCC 700388 / DSM 13276 / CCUG 48851 / CIP 106301 / E264).